The primary structure comprises 101 residues: Large ribosomal subunit protein uL24 (101 aa).

It belongs to the universal ribosomal protein uL24 family. In terms of assembly, part of the 50S ribosomal subunit.

In terms of biological role, one of two assembly initiator proteins, it binds directly to the 5'-end of the 23S rRNA, where it nucleates assembly of the 50S subunit. One of the proteins that surrounds the polypeptide exit tunnel on the outside of the subunit. The sequence is that of Large ribosomal subunit protein uL24 from Streptococcus thermophilus (strain CNRZ 1066).